A 386-amino-acid chain; its full sequence is Homoserine O-succinyltransferase (386 aa).

The AB hydrolase-1 domain maps to 49–358; sequence NAILICHALS…DAEQGHDSFL (310 aa). Ser-156 serves as the catalytic Nucleophile. Arg-226 contributes to the substrate binding site. Catalysis depends on residues Asp-321 and His-354. A substrate-binding site is contributed by Asp-355.

The protein belongs to the AB hydrolase superfamily. MetX family. Homodimer.

The protein resides in the cytoplasm. The catalysed reaction is L-homoserine + succinyl-CoA = O-succinyl-L-homoserine + CoA. It functions in the pathway amino-acid biosynthesis; L-methionine biosynthesis via de novo pathway; O-succinyl-L-homoserine from L-homoserine: step 1/1. Functionally, transfers a succinyl group from succinyl-CoA to L-homoserine, forming succinyl-L-homoserine. The polypeptide is Homoserine O-succinyltransferase (Acinetobacter baumannii (strain SDF)).